Consider the following 164-residue polypeptide: Shikimate kinase (164 aa).

11 to 16 (GSGKST) serves as a coordination point for ATP. Serine 15 serves as a coordination point for Mg(2+). Positions 33, 57, and 79 each coordinate substrate. Residue arginine 117 participates in ATP binding. Residue arginine 134 coordinates substrate.

It belongs to the shikimate kinase family. In terms of assembly, monomer. It depends on Mg(2+) as a cofactor.

Its subcellular location is the cytoplasm. The enzyme catalyses shikimate + ATP = 3-phosphoshikimate + ADP + H(+). The protein operates within metabolic intermediate biosynthesis; chorismate biosynthesis; chorismate from D-erythrose 4-phosphate and phosphoenolpyruvate: step 5/7. Its function is as follows. Catalyzes the specific phosphorylation of the 3-hydroxyl group of shikimic acid using ATP as a cosubstrate. The sequence is that of Shikimate kinase from Persephonella marina (strain DSM 14350 / EX-H1).